Here is a 975-residue protein sequence, read N- to C-terminus: Protein bicaudal D homolog 1 (975 aa).

Coiled-coil stretches lie at residues 1 to 265 (MAAE…HISI) and 319 to 496 (SELN…IANE). 5 disordered regions span residues 383–403 (SSKELKAELDGEKGRDSGEEA), 545–616 (RSGS…LDTS), 800–824 (DHEQSRRSKGKLGKSKIGSPKVSGE), 836–877 (LLHS…ASYL), and 922–975 (DCQQ…PPHP). Basic and acidic residues-rich tracts occupy residues 385–403 (KELKAELDGEKGRDSGEEA) and 581–590 (VAKESTEASK). Polar residues predominate over residues 592-602 (PSPTKTPTISP). A coiled-coil region spans residues 663-803 (IDKDKEALME…LEDLEFDHEQ (141 aa)). Positions 663–803 (IDKDKEALME…LEDLEFDHEQ (141 aa)) are interaction with RAB6A. Polar residues predominate over residues 840–877 (QGPQTPNIRVSSGTQRKRQFSPSLCDQSRPRTSGASYL).

It belongs to the BicD family. Interacts with RAB6A. Interacts (via C-terminus) with RAB6B (GTP-bound); the interaction is direct. Interacts with CLIP-115 and KIFC2. As to quaternary structure, (Microbial infection) Interacts with human cytomegalovirus/HHV-5 protein UL32. In terms of tissue distribution, expressed in the brain, heart and skeletal muscle.

It localises to the golgi apparatus. Functionally, regulates coat complex coatomer protein I (COPI)-independent Golgi-endoplasmic reticulum transport by recruiting the dynein-dynactin motor complex. This chain is Protein bicaudal D homolog 1 (BICD1), found in Homo sapiens (Human).